Consider the following 361-residue polypeptide: Phospho-N-acetylmuramoyl-pentapeptide-transferase (361 aa).

Transmembrane regions (helical) follow at residues 28 to 48 (LAVL…IKFL), 74 to 94 (TMGG…LADL), 99 to 119 (IWIT…DDYA), 135 to 155 (LLLQ…TIDS), 167 to 187 (SLSM…IVGA), 203 to 223 (VPIA…GNLI), 236 to 256 (TGEL…FLWF), 263 to 283 (VFMG…ISVI), 288 to 308 (IVLG…IMQV), and 338 to 358 (KVVI…LSSL).

This sequence belongs to the glycosyltransferase 4 family. MraY subfamily. Mg(2+) is required as a cofactor.

The protein resides in the cell inner membrane. The catalysed reaction is UDP-N-acetyl-alpha-D-muramoyl-L-alanyl-gamma-D-glutamyl-meso-2,6-diaminopimeloyl-D-alanyl-D-alanine + di-trans,octa-cis-undecaprenyl phosphate = di-trans,octa-cis-undecaprenyl diphospho-N-acetyl-alpha-D-muramoyl-L-alanyl-D-glutamyl-meso-2,6-diaminopimeloyl-D-alanyl-D-alanine + UMP. It functions in the pathway cell wall biogenesis; peptidoglycan biosynthesis. Catalyzes the initial step of the lipid cycle reactions in the biosynthesis of the cell wall peptidoglycan: transfers peptidoglycan precursor phospho-MurNAc-pentapeptide from UDP-MurNAc-pentapeptide onto the lipid carrier undecaprenyl phosphate, yielding undecaprenyl-pyrophosphoryl-MurNAc-pentapeptide, known as lipid I. This is Phospho-N-acetylmuramoyl-pentapeptide-transferase from Rickettsia bellii (strain OSU 85-389).